The primary structure comprises 352 residues: Molybdenum import ATP-binding protein ModC (352 aa).

In terms of domain architecture, ABC transporter spans 1–229; the sequence is MLELNFSQTL…SVMNPWLPKE (229 aa). Position 31–38 (31–38) interacts with ATP; the sequence is GVSGAGKT. The region spanning 289–352 is the Mop domain; it reads QTSIRNVLRA…AQIKSVSITA (64 aa).

It belongs to the ABC transporter superfamily. Molybdate importer (TC 3.A.1.8) family. As to quaternary structure, the complex is composed of two ATP-binding proteins (ModC), two transmembrane proteins (ModB) and a solute-binding protein (ModA).

It localises to the cell inner membrane. It carries out the reaction molybdate(out) + ATP + H2O = molybdate(in) + ADP + phosphate + H(+). In terms of biological role, part of the ABC transporter complex ModABC involved in molybdenum import. Responsible for energy coupling to the transport system. The chain is Molybdenum import ATP-binding protein ModC from Shigella flexneri.